A 511-amino-acid chain; its full sequence is TNF receptor-associated factor family protein DDB_G0290931 (511 aa).

An RING-type; degenerate zinc finger spans residues 27 to 67 (CPICFELIYKKSIYQCSSGHYACQECWEKSLEIKQECMICR). The stretch at 103-169 (IDGANQENED…RKLIKDEENG (67 aa)) forms a coiled coil. The segment at 107 to 159 (NQENEDEENEDEENEDDEDENEDEENGEDDEDKDEDEENENENEENKDEENEK) is disordered. The segment covering 109–155 (ENEDEENEDEENEDDEDENEDEENGEDDEDKDEDEENENENEENKDE) has biased composition (acidic residues). 2 TRAF-type zinc fingers span residues 181 to 234 (RHIQ…QVQL) and 236 to 293 (NHYD…SELQ). Positions 324–358 (ELLLKEIEKSKITCSELQRKNDELSSLITEIDDNY) form a coiled coil. One can recognise an MATH domain in the interval 374 to 499 (GYTNKWIISN…DDKLTINIYV (126 aa)).

The protein belongs to the TNF receptor-associated factor family. A subfamily.

It localises to the cytoplasm. In terms of biological role, probable adapter protein and signal transducer that links members of the tumor necrosis factor receptor family to different signaling pathways by association with the receptor cytoplasmic domain and kinases. This Dictyostelium discoideum (Social amoeba) protein is TNF receptor-associated factor family protein DDB_G0290931.